The sequence spans 315 residues: Cobalamin biosynthesis protein CobD (315 aa).

5 helical membrane-spanning segments follow: residues 48 to 70 (IAGI…LSVQ), 75 to 94 (LHWI…TIAI), 148 to 170 (LVDG…AMLY), 208 to 230 (ITSY…SLYI), and 292 to 314 (LILL…AAYF).

It belongs to the CobD/CbiB family.

The protein resides in the cell membrane. Its pathway is cofactor biosynthesis; adenosylcobalamin biosynthesis. In terms of biological role, converts cobyric acid to cobinamide by the addition of aminopropanol on the F carboxylic group. The polypeptide is Cobalamin biosynthesis protein CobD (Leptospira interrogans serogroup Icterohaemorrhagiae serovar copenhageni (strain Fiocruz L1-130)).